The sequence spans 256 residues: Acetyl-coenzyme A carboxylase carboxyl transferase subunit alpha (256 aa).

Residues 1-236 (MTDVSRVLKE…KANLIEQITS (236 aa)) form the CoA carboxyltransferase C-terminal domain.

This sequence belongs to the AccA family. In terms of assembly, acetyl-CoA carboxylase is a heterohexamer composed of biotin carboxyl carrier protein (AccB), biotin carboxylase (AccC) and two subunits each of ACCase subunit alpha (AccA) and ACCase subunit beta (AccD).

Its subcellular location is the cytoplasm. The enzyme catalyses N(6)-carboxybiotinyl-L-lysyl-[protein] + acetyl-CoA = N(6)-biotinyl-L-lysyl-[protein] + malonyl-CoA. Its pathway is lipid metabolism; malonyl-CoA biosynthesis; malonyl-CoA from acetyl-CoA: step 1/1. In terms of biological role, component of the acetyl coenzyme A carboxylase (ACC) complex. First, biotin carboxylase catalyzes the carboxylation of biotin on its carrier protein (BCCP) and then the CO(2) group is transferred by the carboxyltransferase to acetyl-CoA to form malonyl-CoA. This is Acetyl-coenzyme A carboxylase carboxyl transferase subunit alpha from Streptococcus pyogenes serotype M2 (strain MGAS10270).